A 263-amino-acid chain; its full sequence is MPFSVEVEVFFLLVEDKLGWLPTLQPVRHGSKAVTRHRRVMHFQRQKLMAITEYIPPRPAVSPRCLPPPPKPPKEESGLIRLLRRDIAAVFRDNRMIAVCQNVALSAEDKLLLRHQLRKHKIFIKVFPSQVLKPFLEDSKYQNLLPLFVGHNLLLVSEEPKVKEMVRILKSVPFLPLLGGCIDDTILSRQGFVEYAKLPSLDRLQGELVGGLTHLTAQTRYLLQHQPVQLTSLLDQYVRQQHEGDCATSTEGKPHPPDPAPDS.

The N-terminal 29 residues, 1-29 (MPFSVEVEVFFLLVEDKLGWLPTLQPVRH), are a transit peptide targeting the mitochondrion. Residues 241–263 (QHEGDCATSTEGKPHPPDPAPDS) form a disordered region.

It belongs to the universal ribosomal protein uL10 family. Component of the mitochondrial ribosome large subunit (39S) which comprises a 16S rRNA and about 50 distinct proteins.

The protein resides in the mitochondrion. The protein is Large ribosomal subunit protein uL10m (Mrpl10) of Rattus norvegicus (Rat).